The following is a 513-amino-acid chain: ATP synthase subunit alpha (513 aa).

169–176 (GDRQTGKT) is a binding site for ATP.

The protein belongs to the ATPase alpha/beta chains family. F-type ATPases have 2 components, CF(1) - the catalytic core - and CF(0) - the membrane proton channel. CF(1) has five subunits: alpha(3), beta(3), gamma(1), delta(1), epsilon(1). CF(0) has three main subunits: a(1), b(2) and c(9-12). The alpha and beta chains form an alternating ring which encloses part of the gamma chain. CF(1) is attached to CF(0) by a central stalk formed by the gamma and epsilon chains, while a peripheral stalk is formed by the delta and b chains.

It is found in the cell inner membrane. It carries out the reaction ATP + H2O + 4 H(+)(in) = ADP + phosphate + 5 H(+)(out). Produces ATP from ADP in the presence of a proton gradient across the membrane. The alpha chain is a regulatory subunit. This is ATP synthase subunit alpha from Haemophilus influenzae (strain 86-028NP).